Reading from the N-terminus, the 286-residue chain is Protein NipSnap homolog 2 (286 aa).

The transit peptide at 1–23 directs the protein to the mitochondrion; that stretch reads MAARVLRARGAAWAGGLLQRAAP.

Belongs to the NipSnap family. As to quaternary structure, interacts with CALCOCO2/NDP52, NBR1, SQSTM1/p62, TAX1BP1 and WDFY3/ALFY. Interacts with ATG8 family proteins (MAP1LC3A, MAP1LC3B, MAP1LC3C, GABARAP, GABARAPL1 and GABARAPL2). Interacts with VDAC1. As to expression, widely expressed. Most abundant in heart and skeletal muscle.

It localises to the mitochondrion matrix. Its function is as follows. Protein involved in mitophagy by facilitating recruitment of the autophagy machinery required for clearance of damaged mitochondria. Accumulates on the mitochondria surface in response to mitochondrial depolarization and acts as a 'eat me' signal by recruiting proteins involved in selective autophagy, such as autophagy receptors (CALCOCO2/NDP52, NBR1, SQSTM1/p62, TAX1BP1 and WDFY3/ALFY) and ATG8 family proteins (MAP1LC3A, MAP1LC3B, MAP1LC3C, GABARAP, GABARAPL1 and GABARAPL2). The chain is Protein NipSnap homolog 2 from Homo sapiens (Human).